The chain runs to 685 residues: Iron(3+)-hydroxamate import system permease protein FhuB (685 aa).

The next 18 helical transmembrane spans lie at 35–55 (ALLL…NFSV), 87–107 (LAIS…FQQV), 120–140 (VATG…PGAL), 143–163 (QFAA…VAWG), 172–192 (ILAG…LVIF), 222–242 (QLLG…LMGL), 265–285 (AIVL…IGLF), 302–322 (LMLA…IILW), 328–348 (MEVS…LWLL), 373–393 (LAFA…ALSF), 416–436 (WPRI…GCII), 456–476 (AAFG…GWLL), 479–499 (GSLG…RGGF), 504–524 (MLLA…MLQA), 553–573 (AIVM…LTIL), 592–612 (IALL…IGPL), 632–652 (MPHM…ADWC), and 660–680 (YQIP…IYLL).

It belongs to the binding-protein-dependent transport system permease family. FecCD subfamily. In terms of assembly, the complex is composed of two ATP-binding proteins (FhuC), a transmembrane protein (FhuB) and a solute-binding protein (FhuD).

The protein resides in the cell inner membrane. In terms of biological role, part of the ABC transporter complex FhuCDB involved in iron(3+)-hydroxamate import. Responsible for the translocation of the substrate across the membrane. Involved in ferrioxamine-mediated iron(III) utilization. The protein is Iron(3+)-hydroxamate import system permease protein FhuB (fhuB) of Salmonella typhimurium (strain LT2 / SGSC1412 / ATCC 700720).